A 61-amino-acid chain; its full sequence is Large ribosomal subunit protein uL30 (61 aa).

It belongs to the universal ribosomal protein uL30 family. Part of the 50S ribosomal subunit.

In Chlorobium phaeovibrioides (strain DSM 265 / 1930) (Prosthecochloris vibrioformis (strain DSM 265)), this protein is Large ribosomal subunit protein uL30.